The sequence spans 286 residues: 4-hydroxybenzoate octaprenyltransferase (286 aa).

Transmembrane regions (helical) follow at residues 21–40 (GTLL…AGGM), 95–115 (ILFV…NGLV), 142–162 (FLGI…TGEV), 167–187 (WWLF…YAMV), 210–230 (QIIG…GWSA), 235–255 (LYGL…MLIF), and 266–286 (FLNN…DYLI).

It belongs to the UbiA prenyltransferase family. It depends on Mg(2+) as a cofactor.

It is found in the cell inner membrane. It catalyses the reaction all-trans-octaprenyl diphosphate + 4-hydroxybenzoate = 4-hydroxy-3-(all-trans-octaprenyl)benzoate + diphosphate. It functions in the pathway cofactor biosynthesis; ubiquinone biosynthesis. Its function is as follows. Catalyzes the prenylation of para-hydroxybenzoate (PHB) with an all-trans polyprenyl group. Mediates the second step in the final reaction sequence of ubiquinone-8 (UQ-8) biosynthesis, which is the condensation of the polyisoprenoid side chain with PHB, generating the first membrane-bound Q intermediate 3-octaprenyl-4-hydroxybenzoate. The sequence is that of 4-hydroxybenzoate octaprenyltransferase from Shewanella baltica (strain OS185).